The following is a 195-amino-acid chain: MVTVVAETLTKESFEEYGTIISPDEEISRMQNLEKGANQGTAIKLLQVSQVENKSTSKVPNWNLFRCFPQPHLNRVFTQGSNQAISHSIKVLEKHPCSTQTFVPMGRTSAEVAYLVVVAKEIGNKPDLSTLRAFTCLGNQAVTYGLGTWHAPMIVLGKEEHLDFSVLIYESLDPDRPEKDCVEEHYSDGDVCIII.

This sequence belongs to the ureidoglycolate lyase family. In terms of assembly, homodimer.

It catalyses the reaction (S)-ureidoglycolate = urea + glyoxylate. The protein operates within nitrogen metabolism; (S)-allantoin degradation. Functionally, catalyzes the catabolism of the allantoin degradation intermediate (S)-ureidoglycolate, generating urea and glyoxylate. Involved in the utilization of allantoin as secondary nitrogen source when primary sources are limiting. The sequence is that of Ureidoglycolate lyase (DAL3) from Saccharomyces cerevisiae (strain ATCC 204508 / S288c) (Baker's yeast).